The following is a 787-amino-acid chain: Pyridoxal-dependent decarboxylase domain-containing protein 1 (787 aa).

The segment covering 26–44 (MLEKSPRRTEEENGKKPVS) has biased composition (basic and acidic residues). The tract at residues 26-52 (MLEKSPRRTEEENGKKPVSEDIPGPLQ) is disordered. Residue Ser652 is modified to Phosphoserine. The interval 682–787 (QGTGVTPPPT…SQVEELERLR (106 aa)) is disordered. Phosphothreonine occurs at positions 687 and 691. A phosphoserine mark is found at Ser710, Ser718, Ser722, and Ser748. The segment covering 725-748 (HIEDLEKVEQLSSGLEHDNLEAHS) has biased composition (basic and acidic residues). Over residues 759-771 (TARQTEALQNQAQ) the composition is skewed to polar residues. Positions 772-787 (HQEDDHSQVEELERLR) are enriched in basic and acidic residues. At Ser778 the chain carries Phosphoserine.

This sequence belongs to the group II decarboxylase family. It depends on pyridoxal 5'-phosphate as a cofactor.

The polypeptide is Pyridoxal-dependent decarboxylase domain-containing protein 1 (Pdxdc1) (Mus musculus (Mouse)).